The following is a 214-amino-acid chain: Large ribosomal subunit protein uL16-like (214 aa).

It belongs to the universal ribosomal protein uL16 family. Component of the 60S large ribosomal subunit (LSU).

Its subcellular location is the cytoplasm. In terms of biological role, testis-specific component of the ribosome, which is required for the transition from prophase to metaphase in male meiosis I. Compensates for the inactivated X-linked RPL10 paralog during spermatogenesis. The ribosome is a large ribonucleoprotein complex responsible for the synthesis of proteins in the cell. The small ribosomal subunit (SSU) binds messenger RNAs (mRNAs) and translates the encoded message by selecting cognate aminoacyl-transfer RNA (tRNA) molecules. The large subunit (LSU) contains the ribosomal catalytic site termed the peptidyl transferase center (PTC), which catalyzes the formation of peptide bonds, thereby polymerizing the amino acids delivered by tRNAs into a polypeptide chain. The nascent polypeptides leave the ribosome through a tunnel in the LSU and interact with protein factors that function in enzymatic processing, targeting, and the membrane insertion of nascent chains at the exit of the ribosomal tunnel. This is Large ribosomal subunit protein uL16-like (RPL10L) from Bos taurus (Bovine).